Reading from the N-terminus, the 300-residue chain is Urease accessory protein UreD (300 aa).

The protein belongs to the UreD family. In terms of assembly, ureD, UreF and UreG form a complex that acts as a GTP-hydrolysis-dependent molecular chaperone, activating the urease apoprotein by helping to assemble the nickel containing metallocenter of UreC. The UreE protein probably delivers the nickel.

The protein localises to the cytoplasm. Required for maturation of urease via the functional incorporation of the urease nickel metallocenter. This chain is Urease accessory protein UreD, found in Prochlorococcus marinus (strain MIT 9312).